Reading from the N-terminus, the 362-residue chain is Spermidine/putrescine import ATP-binding protein PotA (362 aa).

An ABC transporter domain is found at 6–237 (ISFKHVVKSY…PINHYVADFI (232 aa)). 39–46 (GPSGCGKT) serves as a coordination point for ATP.

Belongs to the ABC transporter superfamily. Spermidine/putrescine importer (TC 3.A.1.11.1) family. In terms of assembly, the complex is composed of two ATP-binding proteins (PotA), two transmembrane proteins (PotB and PotC) and a solute-binding protein (PotD).

It is found in the cell membrane. It catalyses the reaction ATP + H2O + polyamine-[polyamine-binding protein]Side 1 = ADP + phosphate + polyamineSide 2 + [polyamine-binding protein]Side 1.. Its function is as follows. Part of the ABC transporter complex PotABCD involved in spermidine/putrescine import. Responsible for energy coupling to the transport system. The protein is Spermidine/putrescine import ATP-binding protein PotA of Ligilactobacillus salivarius (strain UCC118) (Lactobacillus salivarius).